A 300-amino-acid polypeptide reads, in one-letter code: Bifunctional protein FolD (300 aa).

NADP(+) contacts are provided by residues 169-171, S196, and I237; that span reads GRG.

It belongs to the tetrahydrofolate dehydrogenase/cyclohydrolase family. As to quaternary structure, homodimer.

The catalysed reaction is (6R)-5,10-methylene-5,6,7,8-tetrahydrofolate + NADP(+) = (6R)-5,10-methenyltetrahydrofolate + NADPH. It catalyses the reaction (6R)-5,10-methenyltetrahydrofolate + H2O = (6R)-10-formyltetrahydrofolate + H(+). Its pathway is one-carbon metabolism; tetrahydrofolate interconversion. Its function is as follows. Catalyzes the oxidation of 5,10-methylenetetrahydrofolate to 5,10-methenyltetrahydrofolate and then the hydrolysis of 5,10-methenyltetrahydrofolate to 10-formyltetrahydrofolate. The chain is Bifunctional protein FolD from Clavibacter sepedonicus (Clavibacter michiganensis subsp. sepedonicus).